The chain runs to 343 residues: Selenide, water dikinase (343 aa).

C15 is an active-site residue. ATP contacts are provided by residues K18 and 46 to 48; that span reads NKD. Residue D49 coordinates Mg(2+). Residues D66, D89, and 137-139 contribute to the ATP site; that span reads GHS. Residue D89 participates in Mg(2+) binding. Mg(2+) is bound at residue D225.

It belongs to the selenophosphate synthase 1 family. Class I subfamily. Homodimer. Requires Mg(2+) as cofactor.

The enzyme catalyses hydrogenselenide + ATP + H2O = selenophosphate + AMP + phosphate + 2 H(+). Its function is as follows. Synthesizes selenophosphate from selenide and ATP. This Sulfurovum sp. (strain NBC37-1) protein is Selenide, water dikinase.